A 74-amino-acid chain; its full sequence is MKEKEFQSKPLLTKREREVFELLVQDKTTKEIASELFISEKTVRNHISNAMQKLGVKGRSQAVVELLRMGELEL.

The HTH luxR-type domain maps to 5-70 (EFQSKPLLTK…QAVVELLRMG (66 aa)). The H-T-H motif DNA-binding region spans 29 to 48 (TKEIASELFISEKTVRNHIS).

In terms of biological role, involved in the regulation of spore formation. Directs the transcription of several genes that encode structural components of the protein coat that encases the mature spore (CotB, CotC, CotG, CotS, CotV, CotW, CotX, CotY and CotZ). Also controls the cgeAB and cgeCDE operons. The protein is Spore germination protein GerE (gerE) of Bacillus subtilis (strain 168).